The following is a 92-amino-acid chain: Parbolysin P7 (92 aa).

3 disulfides stabilise this stretch: Cys15–Cys36, Cys21–Cys32, and Cys46–Cys59.

Belongs to the worm cytolysin family. Localized within the skin and proboscis and are most readily isolated from body mucus secretions.

It localises to the secreted. In terms of biological role, cytolysin that shows hemolytic activity (on bovine erythrocytes, HC(50)=5.75 mg/ml). This hemolytic activity is completely inhibited by small unilamelar vesicles composed of PC/PG, PC/PI and PC/PS in 1:1 molar ratios (with at least 100 mg/ml concentration). The chain is Parbolysin P7 from Parborlasia corrugatus (Antarctic nemertean worm).